Here is a 640-residue protein sequence, read N- to C-terminus: Influenza virus NS1A-binding protein homolog B (640 aa).

The BTB domain maps to 32-100 (CDVRLLVCGH…AYTAQLKADK (69 aa)). The BACK domain occupies 135 to 186 (AISYRNFASSMADGRLLGKIDGYIQDHLHEISEQDDFLKLPRLKLEVMLEDN). Residues 257 to 278 (KKPPRERDEMGSGASGSISPSN) are disordered. Low complexity predominate over residues 267 to 278 (GSGASGSISPSN). 6 Kelch repeats span residues 366 to 412 (KLIA…VLMG), 413 to 460 (EVYV…SLQN), 462 to 509 (LFVV…ELSG), 510 to 556 (YMYV…VYEG), 557 to 603 (KLFV…VLNN), and 605 to 640 (LCAV…LGKN).

It is found in the cytoplasm. It localises to the cytoskeleton. The protein resides in the nucleus. In terms of biological role, plays a role in cell division and in the dynamic organization of the actin skeleton as a stabilizer of actin filaments by association with F-actin through Kelch repeats. The chain is Influenza virus NS1A-binding protein homolog B (ivns1abpb) from Danio rerio (Zebrafish).